Reading from the N-terminus, the 321-residue chain is Cytochrome c biogenesis protein CcsA (321 aa).

7 helical membrane-spanning segments follow: residues 9–29 (ILTH…LITL), 44–64 (GMIA…ASSG), 68–88 (LSNL…LHMI), 143–163 (MLLS…LLMI), 226–246 (VISL…VWAN), 260–274 (TWAF…IYLH), and 289–309 (VASI…LLGI).

It belongs to the CcmF/CycK/Ccl1/NrfE/CcsA family. May interact with Ccs1.

It is found in the plastid. The protein resides in the chloroplast thylakoid membrane. Its function is as follows. Required during biogenesis of c-type cytochromes (cytochrome c6 and cytochrome f) at the step of heme attachment. This chain is Cytochrome c biogenesis protein CcsA, found in Oryza sativa (Rice).